The primary structure comprises 356 residues: MFERLQSLDERYERLNELLSDPEVISDSNKLREYSKEQADMEETVQVYREYKTVMDQYQDAKEMLEDKLDDEMYAMVKEEIDELATRKEDLEAKLKVLLLPKDPNDDKNVIVEVRGAAGGDEAQLFAADLYKMYARYAEAQGWKIEVIEASSTELGGYKEIIFSVNGKGAYSKLKYENGAHRVQRVPQTESGGRIHTSTATVAVLPEAEEVEVDIHEKDIRVDTFASSGPGGQSVNTTMSAVRLTHLPTGIVVSCQDEKSQIKNKEKAMKVLRARIYDKFQQEAQAEYDQTRKSAVGTGDRSERIRTYNFPQSRVTDHRIGLTLQKLEQILQGKLDEIIESLIVHEQAELMKQQED.

N5-methylglutamine is present on Gln233.

It belongs to the prokaryotic/mitochondrial release factor family. Post-translationally, methylated by PrmC. Methylation increases the termination efficiency of RF1.

The protein resides in the cytoplasm. Its function is as follows. Peptide chain release factor 1 directs the termination of translation in response to the peptide chain termination codons UAG and UAA. This Halalkalibacterium halodurans (strain ATCC BAA-125 / DSM 18197 / FERM 7344 / JCM 9153 / C-125) (Bacillus halodurans) protein is Peptide chain release factor 1.